The sequence spans 312 residues: tRNA U34 carboxymethyltransferase (312 aa).

Residues Lys88, Trp102, Lys107, Gly127, 149–151, 177–178, Met191, Tyr195, and Arg304 contribute to the carboxy-S-adenosyl-L-methionine site; these read DPS and LD.

Belongs to the class I-like SAM-binding methyltransferase superfamily. CmoB family. As to quaternary structure, homotetramer.

The enzyme catalyses carboxy-S-adenosyl-L-methionine + 5-hydroxyuridine(34) in tRNA = 5-carboxymethoxyuridine(34) in tRNA + S-adenosyl-L-homocysteine + H(+). In terms of biological role, catalyzes carboxymethyl transfer from carboxy-S-adenosyl-L-methionine (Cx-SAM) to 5-hydroxyuridine (ho5U) to form 5-carboxymethoxyuridine (cmo5U) at position 34 in tRNAs. The sequence is that of tRNA U34 carboxymethyltransferase from Dichelobacter nodosus (strain VCS1703A).